The sequence spans 255 residues: Postacrosomal sheath WW domain-binding protein (255 aa).

Positions 15 to 87 constitute a GRAM domain; sequence LIPNGESLLK…DLITNLTVEQ (73 aa). Repeat copies occupy residues 139–145, 146–152, 153–159, 160–166, 167–173, 174–180, and 202–208. Residues 139–208 are 6 X 7 AA tandem repeat of Y-G-X-P-P-X-G; it reads YGAPPAGYGA…PAGYGAPPLG (70 aa). The PPxY motif motif lies at 171 to 174; that stretch reads PPGY. Disordered regions lie at residues 180-199 and 204-255; these read GYGA…RASP and APPL…ASSS.

Functionally, may play a role in meiotic resumption and pronuclear formation, mediated by a WW domain-signaling pathway during fertilization. This Macaca fascicularis (Crab-eating macaque) protein is Postacrosomal sheath WW domain-binding protein (WBP2NL).